The following is a 446-amino-acid chain: Na(+)-translocating NADH-quinone reductase subunit A (446 aa).

The protein belongs to the NqrA family. As to quaternary structure, composed of six subunits; NqrA, NqrB, NqrC, NqrD, NqrE and NqrF.

The catalysed reaction is a ubiquinone + n Na(+)(in) + NADH + H(+) = a ubiquinol + n Na(+)(out) + NAD(+). Its function is as follows. NQR complex catalyzes the reduction of ubiquinone-1 to ubiquinol by two successive reactions, coupled with the transport of Na(+) ions from the cytoplasm to the periplasm. NqrA to NqrE are probably involved in the second step, the conversion of ubisemiquinone to ubiquinol. The protein is Na(+)-translocating NADH-quinone reductase subunit A of Vibrio campbellii (strain ATCC BAA-1116).